The primary structure comprises 267 residues: Ribosomal RNA small subunit methyltransferase A (267 aa).

6 residues coordinate S-adenosyl-L-methionine: asparagine 13, leucine 15, glycine 39, glutamate 59, aspartate 87, and asparagine 106.

This sequence belongs to the class I-like SAM-binding methyltransferase superfamily. rRNA adenine N(6)-methyltransferase family. RsmA subfamily.

The protein localises to the cytoplasm. The catalysed reaction is adenosine(1518)/adenosine(1519) in 16S rRNA + 4 S-adenosyl-L-methionine = N(6)-dimethyladenosine(1518)/N(6)-dimethyladenosine(1519) in 16S rRNA + 4 S-adenosyl-L-homocysteine + 4 H(+). Its function is as follows. Specifically dimethylates two adjacent adenosines (A1518 and A1519) in the loop of a conserved hairpin near the 3'-end of 16S rRNA in the 30S particle. May play a critical role in biogenesis of 30S subunits. This chain is Ribosomal RNA small subunit methyltransferase A, found in Sulfurimonas denitrificans (strain ATCC 33889 / DSM 1251) (Thiomicrospira denitrificans (strain ATCC 33889 / DSM 1251)).